The primary structure comprises 182 residues: CKLF-like MARVEL transmembrane domain-containing protein 3 (182 aa).

Residues 1–12 (MWPPDPDPDPDP) are compositionally biased toward acidic residues. Residues 1-21 (MWPPDPDPDPDPEPAGGSRPG) form a disordered region. Positions 36–155 (FLCSLKGRLL…DFYLIFNDVA (120 aa)) constitute an MARVEL domain. The next 3 membrane-spanning stretches (helical) occupy residues 64-84 (ASAF…FLFA), 101-121 (MDFL…ITAI), and 131-151 (AAGV…YLIF).

The protein belongs to the chemokine-like factor family. In terms of tissue distribution, expressed in the leukocytes, placenta and testis.

The protein resides in the membrane. In Homo sapiens (Human), this protein is CKLF-like MARVEL transmembrane domain-containing protein 3 (CMTM3).